The following is a 238-amino-acid chain: Ribosomal RNA small subunit methyltransferase G (238 aa).

Residues glycine 77, phenylalanine 82, 128–129 (AE), and arginine 147 each bind S-adenosyl-L-methionine.

Belongs to the methyltransferase superfamily. RNA methyltransferase RsmG family.

It is found in the cytoplasm. Specifically methylates the N7 position of guanine in position 535 of 16S rRNA. In Exiguobacterium sibiricum (strain DSM 17290 / CCUG 55495 / CIP 109462 / JCM 13490 / 255-15), this protein is Ribosomal RNA small subunit methyltransferase G.